Here is a 176-residue protein sequence, read N- to C-terminus: Large ribosomal subunit protein eL20 (176 aa).

A Glycyl lysine isopeptide (Lys-Gly) (interchain with G-Cter in SUMO2) cross-link involves residue Lys11. Position 63 is a phosphotyrosine (Tyr63). Ser71 is modified (phosphoserine). The residue at position 76 (Lys76) is an N6-succinyllysine. Residue Ser123 is modified to Phosphoserine. Glycyl lysine isopeptide (Lys-Gly) (interchain with G-Cter in SUMO2) cross-links involve residues Lys128 and Lys170.

This sequence belongs to the eukaryotic ribosomal protein eL20 family. In terms of assembly, component of the large ribosomal subunit. Binds IPO9 with high affinity.

The protein resides in the cytoplasm. Component of the large ribosomal subunit. The ribosome is a large ribonucleoprotein complex responsible for the synthesis of proteins in the cell. The protein is Large ribosomal subunit protein eL20 (RPL18A) of Oryctolagus cuniculus (Rabbit).